A 253-amino-acid chain; its full sequence is MATIKEIKAILETIVDLKDKRWQEYQTDSRAGVQKAILQRKKNIQSDLDEEARLEQMLVYEKKLYIEHINLIAGIDEVGRGPLAGPVVAAAVILPPNCKIKHLNDSKKIPKKKHQEIYQNILDQALAVGIGIQDSQCIDDINIYEATKHAMIDAVSHLSVAPEHLLIDAMVLDLSIPQTKIIKGDANSLSIAAASIVAKVTRDKIMSDYDSTYPGYAFSKNAGYGTKEHLEGLQKYGITPIHRKSFEPIKSML.

The region spanning 70 to 253 is the RNase H type-2 domain; it reads NLIAGIDEVG…KSFEPIKSML (184 aa). The a divalent metal cation site is built by D76, E77, and D168.

The protein belongs to the RNase HII family. Mn(2+) serves as cofactor. Mg(2+) is required as a cofactor.

It localises to the cytoplasm. The enzyme catalyses Endonucleolytic cleavage to 5'-phosphomonoester.. Functionally, endonuclease that specifically degrades the RNA of RNA-DNA hybrids. In Streptococcus agalactiae serotype III (strain NEM316), this protein is Ribonuclease HII.